The sequence spans 470 residues: Auxin transporter-like protein 3 (470 aa).

The Cytoplasmic segment spans residues 1-57 (MAAEKIETVVAGNYLEMEREEENISGNKKSSTKTKLSNFFWHGGSVYDAWFSCASNQ). A helical membrane pass occupies residues 58–75 (VAQVLLTLPYSFSQLGMM). Over 76 to 77 (SG) the chain is Extracellular. The helical transmembrane segment at 78–98 (ILFQLFYGLMGSWTAYLISVL) threads the bilayer. The Cytoplasmic segment spans residues 99-134 (YVEYRTRKEREKFDFRNHVIQWFEVLDGLLGKHWRN). Residues 135–155 (LGLIFNCTFLLFGSVIQLIAC) traverse the membrane as a helical segment. The Extracellular portion of the chain corresponds to 156–170 (ASNIYYINDKLDKRT). The helical transmembrane segment at 171-191 (WTYIFGACCATTVFIPSFHNY) threads the bilayer. Position 192 (Arg192) is a topological domain, cytoplasmic. Residues 193–213 (IWSFLGLAMTTYTSWYLTIAS) form a helical membrane-spanning segment. The Extracellular portion of the chain corresponds to 214-230 (LLHGQAEDVKHSGPTTM). Residues 231 to 251 (VLYFTGATNILYTFGGHAVTV) form a helical membrane-spanning segment. The Cytoplasmic portion of the chain corresponds to 252 to 264 (EIMHAMWKPQKFK). The chain crosses the membrane as a helical span at residues 265-285 (AIYLLATIYVLTLTLPSASAV). Over 286-312 (YWAFGDKLLTHSNALSLLPKTGFRDTA) the chain is Extracellular. The helical transmembrane segment at 313–333 (VILMLIHQFITFGFASTPLYF) threads the bilayer. The Cytoplasmic portion of the chain corresponds to 334–354 (VWEKLIGVHETKSMFKRAMAR). A helical membrane pass occupies residues 355–375 (LPVVVPIWFLAIIFPFFGPIN). Ser376 is a topological domain (extracellular). A helical membrane pass occupies residues 377–397 (AVGSLLVSFTVYIIPALAHML). At 398 to 426 (TFAPAPSRENAVERPPRVVGGWMGTYCIN) the chain is on the cytoplasmic side. The helical transmembrane segment at 427–447 (IFVVVWVFVVGFGFGGWASMV) threads the bilayer. Topologically, residues 448-470 (NFVRQIDTFGLFTKCYQCPPHKP) are extracellular.

This sequence belongs to the amino acid/polyamine transporter 2 family. Amino acid/auxin permease (AAAP) (TC 2.A.18.1) subfamily.

It localises to the cell membrane. Carrier protein involved in proton-driven auxin influx. Mediates the formation of auxin gradient from developing leaves (site of auxin biosynthesis) to tips by contributing to the loading of auxin in vascular tissues and facilitating acropetal (base to tip) auxin transport within inner tissues of the root apex, and basipetal (tip to base) auxin transport within outer tissues of the root apex. This Arabidopsis thaliana (Mouse-ear cress) protein is Auxin transporter-like protein 3 (LAX3).